Here is a 545-residue protein sequence, read N- to C-terminus: Thermosome subunit beta (545 aa).

Belongs to the TCP-1 chaperonin family. In terms of assembly, forms a Heterooligomeric complex of two stacked eight-membered rings.

Molecular chaperone; binds unfolded polypeptides in vitro, and has a weak ATPase activity. The chain is Thermosome subunit beta (thsB) from Thermococcus sp. (strain KS-8).